The sequence spans 374 residues: UPF0754 membrane protein NWMN_1738 (374 aa).

A run of 2 helical transmembrane segments spans residues 4-24 (LFII…TNVI) and 354-374 (SLGF…AIFV).

It belongs to the UPF0754 family.

The protein resides in the cell membrane. This is UPF0754 membrane protein NWMN_1738 from Staphylococcus aureus (strain Newman).